The chain runs to 481 residues: Keratin, type I cytoskeletal 39 (481 aa).

The segment at 1–25 is disordered; sequence MDTKGSTVTISSSTPPQNCSGNTNV. Positions 1–90 are head; the sequence is MDTKGSTVTI…RCSDGINSHE (90 aa). The region spanning 90 to 401 is the IF rod domain; that stretch reads EKETMQILNE…SLLESLDGRL (312 aa). Positions 91-125 are coil 1A; that stretch reads KETMQILNERLASYLEKVRMLEGENADLEDKIQEE. The tract at residues 126–136 is linker 1; that stretch reads CSKTLPILCPD. The segment at 137-237 is coil 1B; that stretch reads YLSYYTTIEQ…HEEEINSLQC (101 aa). Positions 238-253 are linker 12; the sequence is QLGDRINIEVTAAPSV. Positions 254-397 are coil 2; the sequence is DLNQILQKMR…ATYRSLLESL (144 aa). The tract at residues 398 to 481 is tail; that stretch reads DGRLPCNPCT…PCYITRPAKV (84 aa).

This sequence belongs to the intermediate filament family. Heterotetramer of two type I and two type II keratins.

Its function is as follows. May play a role in late hair differentiation. This is Keratin, type I cytoskeletal 39 (Krt39) from Rattus norvegicus (Rat).